The sequence spans 162 residues: Probable chemoreceptor glutamine deamidase CheD (162 aa).

Belongs to the CheD family.

It carries out the reaction L-glutaminyl-[protein] + H2O = L-glutamyl-[protein] + NH4(+). Its function is as follows. Probably deamidates glutamine residues to glutamate on methyl-accepting chemotaxis receptors (MCPs), playing an important role in chemotaxis. The protein is Probable chemoreceptor glutamine deamidase CheD of Clostridium botulinum (strain Eklund 17B / Type B).